We begin with the raw amino-acid sequence, 376 residues long: tRNA 2-selenouridine synthase (376 aa).

The Rhodanese domain maps to 15–138; sequence FVAGKPLIDL…MRQYLIGVIE (124 aa). Cys-98 serves as the catalytic S-selanylcysteine intermediate.

This sequence belongs to the SelU family. In terms of assembly, monomer.

It catalyses the reaction 5-methylaminomethyl-2-thiouridine(34) in tRNA + selenophosphate + (2E)-geranyl diphosphate + H2O + H(+) = 5-methylaminomethyl-2-selenouridine(34) in tRNA + (2E)-thiogeraniol + phosphate + diphosphate. It carries out the reaction 5-methylaminomethyl-2-thiouridine(34) in tRNA + (2E)-geranyl diphosphate = 5-methylaminomethyl-S-(2E)-geranyl-thiouridine(34) in tRNA + diphosphate. The catalysed reaction is 5-methylaminomethyl-S-(2E)-geranyl-thiouridine(34) in tRNA + selenophosphate + H(+) = 5-methylaminomethyl-2-(Se-phospho)selenouridine(34) in tRNA + (2E)-thiogeraniol. The enzyme catalyses 5-methylaminomethyl-2-(Se-phospho)selenouridine(34) in tRNA + H2O = 5-methylaminomethyl-2-selenouridine(34) in tRNA + phosphate. Its function is as follows. Involved in the post-transcriptional modification of the uridine at the wobble position (U34) of tRNA(Lys), tRNA(Glu) and tRNA(Gln). Catalyzes the conversion of 2-thiouridine (S2U-RNA) to 2-selenouridine (Se2U-RNA). Acts in a two-step process involving geranylation of 2-thiouridine (S2U) to S-geranyl-2-thiouridine (geS2U) and subsequent selenation of the latter derivative to 2-selenouridine (Se2U) in the tRNA chain. The sequence is that of tRNA 2-selenouridine synthase from Shewanella oneidensis (strain ATCC 700550 / JCM 31522 / CIP 106686 / LMG 19005 / NCIMB 14063 / MR-1).